Reading from the N-terminus, the 198-residue chain is Type 1 fimbriae regulatory protein FimE (198 aa).

In terms of domain architecture, Tyr recombinase spans 2 to 184; it reads SKRRYLTGKE…NAARFAGLWE (183 aa). Catalysis depends on residues arginine 41, lysine 66, histidine 136, arginine 139, and histidine 162. Tyrosine 171 (O-(3'-phospho-DNA)-tyrosine intermediate) is an active-site residue.

It belongs to the 'phage' integrase family.

FimE is one of the 2 regulatory proteins which control the phase variation of type 1 fimbriae in E.coli. These proteins mediate the periodic inversion of a 300bp DNA segment that harbors the promoter for the fimbrial structural gene, fimA. FimE switches fimA off. This Escherichia coli O6:H1 (strain CFT073 / ATCC 700928 / UPEC) protein is Type 1 fimbriae regulatory protein FimE (fimE).